Here is a 217-residue protein sequence, read N- to C-terminus: Large ribosomal subunit protein uL3 (217 aa).

A disordered region spans residues 134 to 154 (DATHGNSLSHRAPGSIGQCQT). Residue glutamine 153 is modified to N5-methylglutamine.

Belongs to the universal ribosomal protein uL3 family. In terms of assembly, part of the 50S ribosomal subunit. Forms a cluster with proteins L14 and L19. In terms of processing, methylated by PrmB.

In terms of biological role, one of the primary rRNA binding proteins, it binds directly near the 3'-end of the 23S rRNA, where it nucleates assembly of the 50S subunit. The sequence is that of Large ribosomal subunit protein uL3 from Coxiella burnetii (strain Dugway 5J108-111).